Consider the following 217-residue polypeptide: Somatotropin (217 aa).

An N-terminal signal peptide occupies residues 1 to 24 (MAAGSWTSLLLAFTLLCLPQLREA). His44 contacts Zn(2+). A disulfide bond links Cys79 and Cys191. The residue at position 132 (Ser132) is a Phosphoserine. Residue Glu200 participates in Zn(2+) binding. Cys208 and Cys215 are joined by a disulfide.

Belongs to the somatotropin/prolactin family.

It localises to the secreted. Its function is as follows. Plays an important role in growth control. Its major role in stimulating body growth is to stimulate the liver and other tissues to secrete IGF1. It stimulates both the differentiation and proliferation of myoblasts. It also stimulates amino acid uptake and protein synthesis in muscle and other tissues. This Callithrix jacchus (White-tufted-ear marmoset) protein is Somatotropin (GH1).